Consider the following 89-residue polypeptide: Putative acyl-CoA-binding protein (89 aa).

An ACB domain is found at 3–88 (VEEQFKTSAE…VKELVEKNGL (86 aa)). Residues K15, 30-34 (YSLYK), K52, K56, and Y75 contribute to the an acyl-CoA site.

The protein belongs to the ACBP family.

Functionally, binds medium- and long-chain acyl-CoA esters with very high affinity and may function as an intracellular carrier of acyl-CoA esters. This is Putative acyl-CoA-binding protein from Hypsibius exemplaris (Freshwater tardigrade).